A 262-amino-acid chain; its full sequence is 5'-nucleotidase SurE (262 aa).

A divalent metal cation-binding residues include Asp-8, Asp-9, Ser-39, and Asn-91.

It belongs to the SurE nucleotidase family. The cofactor is a divalent metal cation.

Its subcellular location is the cytoplasm. The enzyme catalyses a ribonucleoside 5'-phosphate + H2O = a ribonucleoside + phosphate. Its function is as follows. Nucleotidase that shows phosphatase activity on nucleoside 5'-monophosphates. This chain is 5'-nucleotidase SurE, found in Geobacter sulfurreducens (strain ATCC 51573 / DSM 12127 / PCA).